Here is an 82-residue protein sequence, read N- to C-terminus: uncharacterized protein (82 aa).

This is an uncharacterized protein from Archaeoglobus fulgidus (strain ATCC 49558 / DSM 4304 / JCM 9628 / NBRC 100126 / VC-16).